The primary structure comprises 151 residues: Large ribosomal subunit protein bL9 (151 aa).

The protein belongs to the bacterial ribosomal protein bL9 family.

Its function is as follows. Binds to the 23S rRNA. This is Large ribosomal subunit protein bL9 from Lactobacillus delbrueckii subsp. bulgaricus (strain ATCC 11842 / DSM 20081 / BCRC 10696 / JCM 1002 / NBRC 13953 / NCIMB 11778 / NCTC 12712 / WDCM 00102 / Lb 14).